The chain runs to 342 residues: DNA-directed RNA polymerase subunit alpha (342 aa).

Residues 1–238 (MESLNVNAKN…DQLNMFVNFD (238 aa)) form an alpha N-terminal domain (alpha-NTD) region. Positions 254–342 (FNKNLLRKVD…EMSKKLEEQI (89 aa)) are alpha C-terminal domain (alpha-CTD).

It belongs to the RNA polymerase alpha chain family. As to quaternary structure, homodimer. The RNAP catalytic core consists of 2 alpha, 1 beta, 1 beta' and 1 omega subunit. When a sigma factor is associated with the core the holoenzyme is formed, which can initiate transcription.

It carries out the reaction RNA(n) + a ribonucleoside 5'-triphosphate = RNA(n+1) + diphosphate. In terms of biological role, DNA-dependent RNA polymerase catalyzes the transcription of DNA into RNA using the four ribonucleoside triphosphates as substrates. The sequence is that of DNA-directed RNA polymerase subunit alpha from Pelagibacter ubique (strain HTCC1062).